A 431-amino-acid chain; its full sequence is Mediator of RNA polymerase II transcription subunit 2 (431 aa).

A Phosphoserine modification is found at serine 6. The span at 105-140 (GKEKEKEREEAEKKRAEQENMRKVREQEELKKRQEL) shows a compositional bias: basic and acidic residues. The interval 105–178 (GKEKEKEREE…ANTTDANGSK (74 aa)) is disordered. Residues 143 to 152 (ASQQQQLQQN) show a composition bias toward low complexity. The span at 162 to 178 (NFSTTAPANTTDANGSK) shows a compositional bias: polar residues. Serine 208 carries the post-translational modification Phosphoserine; by CDK8. A disordered region spans residues 284–399 (NNINSTKNGK…GDNPPPADNG (116 aa)). A compositionally biased stretch (basic and acidic residues) spans 304 to 313 (NGDEKNKNNN). The span at 318-365 (NNNNSSEKNNNNNNNNNNNNDDNGNNNNNNSGNDNNNTTNNDSNNKNN) shows a compositional bias: low complexity. Over residues 366–387 (SITTGNDNENIVNNDLPTTVVS) the composition is skewed to polar residues.

This sequence belongs to the mediator complex subunit 2 family. As to quaternary structure, component of the Mediator complex, which is composed of at least 21 subunits that form three structurally distinct submodules. The Mediator head module contains MED6, MED8, MED11, SRB4/MED17, SRB5/MED18, ROX3/MED19, SRB2/MED20 and SRB6/MED22, the middle module contains MED1, MED4, NUT1/MED5, MED7, CSE2/MED9, NUT2/MED10, SRB7/MED21 and SOH1/MED31, and the tail module contains MED2, PGD1/MED3, RGR1/MED14, GAL11/MED15 and SIN4/MED16. The head and the middle modules interact directly with RNA polymerase II, whereas the elongated tail module interacts with gene-specific regulatory proteins.

It localises to the nucleus. Functionally, component of the Mediator complex, a coactivator involved in the regulated transcription of nearly all RNA polymerase II-dependent genes. Mediator functions as a bridge to convey information from gene-specific regulatory proteins to the basal RNA polymerase II transcription machinery. The Mediator complex, having a compact conformation in its free form, is recruited to promoters by direct interactions with regulatory proteins and serves for the assembly of a functional preinitiation complex with RNA polymerase II and the general transcription factors. The Mediator complex unfolds to an extended conformation and partially surrounds RNA polymerase II, specifically interacting with the unphosphorylated form of the C-terminal domain (CTD) of RNA polymerase II. The Mediator complex dissociates from the RNA polymerase II holoenzyme and stays at the promoter when transcriptional elongation begins. The polypeptide is Mediator of RNA polymerase II transcription subunit 2 (MED2) (Saccharomyces cerevisiae (strain ATCC 204508 / S288c) (Baker's yeast)).